Here is a 128-residue protein sequence, read N- to C-terminus: Protein C10 (128 aa).

The protein belongs to the UPF0456 family.

It localises to the cytoplasm. This is Protein C10 from Xenopus laevis (African clawed frog).